The chain runs to 316 residues: Short-chain dehydrogenase/reductase family 16C member 6 (316 aa).

40-64 (LITGAASGLGRLLAIKFASLGAILV) is a binding site for NAD(+). S173 lines the substrate pocket. The active-site Proton acceptor is the Y186.

This sequence belongs to the short-chain dehydrogenases/reductases (SDR) family.

The chain is Short-chain dehydrogenase/reductase family 16C member 6 (SDR16C6) from Bos taurus (Bovine).